The following is a 147-amino-acid chain: Large ribosomal subunit protein uL15 (147 aa).

The tract at residues 1–42 (MTIKLHHLRPAPGSKSNKIRVGRGEGGKRGKTAGRGTKGTKA) is disordered.

Belongs to the universal ribosomal protein uL15 family. Part of the 50S ribosomal subunit.

In terms of biological role, binds to the 23S rRNA. This Rhodococcus erythropolis (strain PR4 / NBRC 100887) protein is Large ribosomal subunit protein uL15.